The chain runs to 32 residues: Ranatuerin-2BYa (32 aa).

Cysteine 27 and cysteine 32 are joined by a disulfide.

In terms of tissue distribution, expressed by the skin glands.

The protein localises to the secreted. In terms of biological role, antibacterial activity against Gram-positive bacterium S.aureus and Gram-negative bacterium E.coli. Weak hemolytic activity. This chain is Ranatuerin-2BYa, found in Rana boylii (Foothill yellow-legged frog).